Consider the following 341-residue polypeptide: HMG box-containing protein C10F6.08c (341 aa).

The segment covering 68–77 (SEAKSREFGQ) has biased composition (basic and acidic residues). Disordered stretches follow at residues 68–195 (SEAK…SNAK) and 236–341 (LTEE…SSNA). Composition is skewed to polar residues over residues 116–157 (DTNV…QVVQ) and 165–177 (NTDP…ITNL). Over residues 178–195 (KTESSKSSGAKKATSNAK) the composition is skewed to low complexity. Positions 195–263 (KITDTMLFNH…KAREARRRRS (69 aa)) form a DNA-binding region, HMG box. 2 stretches are compositionally biased toward basic and acidic residues: residues 238 to 256 (EEEK…EKAR) and 269 to 304 (KLEK…GQKE). Phosphothreonine is present on residues Thr-314 and Thr-315. Position 316 is a phosphoserine (Ser-316).

The protein resides in the nucleus. In Schizosaccharomyces pombe (strain 972 / ATCC 24843) (Fission yeast), this protein is HMG box-containing protein C10F6.08c.